The sequence spans 62 residues: Large ribosomal subunit protein eL37 (62 aa).

Zn(2+) is bound by residues Cys20, Cys23, Cys35, and Cys38. The C4-type zinc-finger motif lies at 20–38 (CRRCGRKAFNVKKGYCAAC).

Belongs to the eukaryotic ribosomal protein eL37 family. Zn(2+) serves as cofactor.

Binds to the 23S rRNA. The sequence is that of Large ribosomal subunit protein eL37 (rpl37e) from Pyrococcus abyssi (strain GE5 / Orsay).